The sequence spans 543 residues: Putative fatty acyl-CoA reductase CG8303 (543 aa).

The tract at residues 1 to 29 (MAVITEHGGTTSSPPENNNSIGNGKHRVN) is disordered. The span at 8-22 (GGTTSSPPENNNSIG) shows a compositional bias: polar residues. 3 helical membrane-spanning segments follow: residues 386 to 406 (LFFY…EKLF), 500 to 520 (VFNV…YFAL), and 522 to 542 (LTLG…FLVW).

This sequence belongs to the fatty acyl-CoA reductase family.

Its subcellular location is the membrane. The enzyme catalyses a long-chain fatty acyl-CoA + 2 NADPH + 2 H(+) = a long-chain primary fatty alcohol + 2 NADP(+) + CoA. The catalysed reaction is hexadecanoyl-CoA + 2 NADPH + 2 H(+) = hexadecan-1-ol + 2 NADP(+) + CoA. It carries out the reaction octadecanoyl-CoA + 2 NADPH + 2 H(+) = octadecan-1-ol + 2 NADP(+) + CoA. Its function is as follows. Catalyzes the reduction of C16 or C18 fatty acyl-CoA to fatty alcohols. The sequence is that of Putative fatty acyl-CoA reductase CG8303 from Drosophila melanogaster (Fruit fly).